The primary structure comprises 2554 residues: Highly reducing polyketide synthase PKS6 (2554 aa).

Residues 1–48 (MGSLSAVPATNGNHAALNGSASTNGQHVNGSTHVNGNHSLNGSAQVNG) are disordered. Residues 8–48 (PATNGNHAALNGSASTNGQHVNGSTHVNGNHSLNGSAQVNG) are compositionally biased toward polar residues. In terms of domain architecture, Ketosynthase family 3 (KS3) spans 56–481 (LEPIAVVGMS…GTNAHVVVDA (426 aa)). Active-site for beta-ketoacyl synthase activity residues include cysteine 230, histidine 367, and histidine 407. A malonyl-CoA:ACP transacylase (MAT) domain region spans residues 595–913 (VFSGQGAQYP…HYTGSLKRGE (319 aa)). An N-terminal hotdog fold region spans residues 981–1119 (HELLGTLVHD…GLVQVILKSE (139 aa)). The segment at 981 to 1281 (HELLGTLVHD…QAWGVVATKL (301 aa)) is dehydratase (DH) domain. A PKS/mFAS DH domain is found at 981 to 1287 (HELLGTLVHD…ATKLPDVSIG (307 aa)). Histidine 1013 functions as the Proton acceptor; for dehydratase activity in the catalytic mechanism. The segment at 1137–1287 (AQHIPANQFY…ATKLPDVSIG (151 aa)) is C-terminal hotdog fold. Aspartate 1200 serves as the catalytic Proton donor; for dehydratase activity. The methyltransferase (CMet) domain stretch occupies residues 1451–1556 (VEVGAGTGSA…KTMLRPGGKL (106 aa)). The enoyl reductase (ER) domain stretch occupies residues 1840–2153 (GVLDTIRWVD…AGKHTGKVIL (314 aa)). The interval 2177–2353 (ATYLVVGGLG…TAYAVNIGAI (177 aa)) is ketoreductase (KR) domain. A Carrier domain is found at 2457 to 2534 (EAQDIICDAI…ELAEIVTKGS (78 aa)). Residue serine 2494 is modified to O-(pantetheine 4'-phosphoryl)serine.

Its pathway is secondary metabolite biosynthesis. In terms of biological role, highly reducing polyketide synthase; part of the gene cluster that mediates the biosynthesis of the lipopeptide fusaristatin A. Fusaristatin A consists of a polyketide chain linked to three amino acid residues glutamine (Gln), dehydroalanine (dehydro-Ala), and beta-aminoisobutyric acid. The biosynthesis starts with formation of a linear polyketide chain by the highly reducing polyketide synthase PKS6. The gene cluster does not contain an acyl-CoA ligase or an acyl-transferase, and it is therefore predicted that the polyketide is transferred directly to the nonribosomal peptide synthetase NRPS7. Modules 1-3 from NRPS7 incorporate dehydro-Ala, Gln, and beta-aminoisobutyric acid in the compound, which is released by cyclization. The beta-aminoisobutyric acid units are most likely not freely available to the NRPS, but can be synthesized from thymine, which requires a dehydrogenase, a monooxygenase, and an aminotransferase. The fusaristatin A cluster contains a cytochrome P450 monooxygenase (FGSG_08207) and an aminotransferase (FGSG_17085), which theoretically can perform two of the enzymatic steps. The enzymes may however also be involved in biosynthesis of dehydroalanine or modification of the polyketide. The dehydro-Ala residue can be a result of cyclization, where serine is dehydrated. The last gene of the cluster encodes a protein with an A/B barrel domain found in variable enzymes, which hampers functional prediction. The polypeptide is Highly reducing polyketide synthase PKS6 (Gibberella zeae (strain ATCC MYA-4620 / CBS 123657 / FGSC 9075 / NRRL 31084 / PH-1) (Wheat head blight fungus)).